The chain runs to 383 residues: Chitinase-3-like protein 1 (383 aa).

The signal sequence occupies residues 1-21 (MGVKASQTGFVVLVLLQCCSA). A GH18 domain is found at 22–383 (YKLVCYYTSW…NAIKDALAAT (362 aa)). Cys-26 and Cys-51 are joined by a disulfide. The N-linked (GlcNAc...) asparagine glycan is linked to Asn-60. Residues 70–71 (EW), 97–100 (GGWN), Tyr-141, 204–207 (MTYD), and Arg-263 contribute to the chitin site. Cys-300 and Cys-364 are joined by a disulfide. Residues 324 to 338 (QWVGYDDQESVKSKV) are important for AKT1 activation and IL8 production. Trp-352 serves as a coordination point for chitin.

This sequence belongs to the glycosyl hydrolase 18 family. As to quaternary structure, monomer. Post-translationally, glycosylated. As to expression, present in activated macrophages, articular chondrocytes, synovial cells as well as in liver. Very low or undetectable expression in non-inflammatory colon. Undetectable in muscle tissues, lung, pancreas, mononuclear cells, or fibroblasts.

It is found in the secreted. Its subcellular location is the extracellular space. The protein localises to the cytoplasm. It localises to the perinuclear region. The protein resides in the endoplasmic reticulum. Functionally, carbohydrate-binding lectin with a preference for chitin. Has no chitinase activity. May play a role in tissue remodeling and in the capacity of cells to respond to and cope with changes in their environment. Plays a role in T-helper cell type 2 (Th2) inflammatory response and IL-13-induced inflammation, regulating allergen sensitization, inflammatory cell apoptosis, dendritic cell accumulation and M2 macrophage differentiation. Facilitates invasion of pathogenic enteric bacteria into colonic mucosa and lymphoid organs. Mediates activation of AKT1 signaling pathway and subsequent IL8 production in colonic epithelial cells. Regulates antibacterial responses in lung by contributing to macrophage bacterial killing, controlling bacterial dissemination and augmenting host tolerance. Also regulates hyperoxia-induced injury, inflammation and epithelial apoptosis in lung. In Homo sapiens (Human), this protein is Chitinase-3-like protein 1 (CHI3L1).